The chain runs to 560 residues: Formate--tetrahydrofolate ligase (560 aa).

69–76 (TPAGEGKS) contacts ATP.

The protein belongs to the formate--tetrahydrofolate ligase family.

It carries out the reaction (6S)-5,6,7,8-tetrahydrofolate + formate + ATP = (6R)-10-formyltetrahydrofolate + ADP + phosphate. The protein operates within one-carbon metabolism; tetrahydrofolate interconversion. In Listeria monocytogenes serovar 1/2a (strain ATCC BAA-679 / EGD-e), this protein is Formate--tetrahydrofolate ligase.